The following is a 358-amino-acid chain: Golgi-resident adenosine 3',5'-bisphosphate 3'-phosphatase (358 aa).

M1 is modified (N-acetylmethionine). Over 1–12 (MAPMGIRLSPLG) the chain is Cytoplasmic. The helical transmembrane segment at 13–33 (VAVFCLLGLGVLYHLYSGFLA) threads the bilayer. Residues 34–358 (GRFSLFGLGG…KLPDLEKMGH (325 aa)) are Lumenal-facing. The tract at residues 85–106 (RESNVLHEKSKGKTREGADDKM) is disordered. Catalysis depends on D110, which acts as the Proton acceptor. Mg(2+)-binding residues include E133, D174, L176, and D177. T179 acts as the Proton acceptor in catalysis. Residues S242 and H245 each coordinate AMP. N-linked (GlcNAc...) asparagine glycosylation occurs at N259. The AMP site is built by G268 and K272. D300 provides a ligand contact to Mg(2+).

It belongs to the inositol monophosphatase superfamily. It depends on Mg(2+) as a cofactor. Contains N-linked glycan resistant to endoglycosydase H.

The protein resides in the golgi apparatus. The protein localises to the trans-Golgi network membrane. The catalysed reaction is adenosine 3',5'-bisphosphate + H2O = AMP + phosphate. Its pathway is sulfur metabolism. Strongly inhibited by lithium. Exhibits 3'-nucleotidase activity toward adenosine 3',5'-bisphosphate (PAP), namely hydrolyzes adenosine 3',5'-bisphosphate into adenosine 5'-monophosphate (AMP) and a phosphate. May play a role in the formation of skeletal elements derived through endochondral ossification, possibly by clearing adenosine 3',5'-bisphosphate produced by Golgi sulfotransferases during glycosaminoglycan sulfation. Has no activity toward 3'-phosphoadenosine 5'-phosphosulfate (PAPS) or inositol phosphate (IP) substrates including I(1)P, I(1,4)P2, I(1,3,4)P3, I(1,4,5)P3 and I(1,3,4,5)P4. This is Golgi-resident adenosine 3',5'-bisphosphate 3'-phosphatase (BPNT2) from Callithrix jacchus (White-tufted-ear marmoset).